Consider the following 345-residue polypeptide: Uroporphyrinogen decarboxylase (345 aa).

Substrate is bound by residues 28-32 (RQAGR), Asp-77, Tyr-152, Ser-207, and His-321.

This sequence belongs to the uroporphyrinogen decarboxylase family. Homodimer.

It localises to the cytoplasm. The catalysed reaction is uroporphyrinogen III + 4 H(+) = coproporphyrinogen III + 4 CO2. It participates in porphyrin-containing compound metabolism; protoporphyrin-IX biosynthesis; coproporphyrinogen-III from 5-aminolevulinate: step 4/4. Catalyzes the decarboxylation of four acetate groups of uroporphyrinogen-III to yield coproporphyrinogen-III. The protein is Uroporphyrinogen decarboxylase of Arthrobacter sp. (strain FB24).